We begin with the raw amino-acid sequence, 624 residues long: Actin-related protein 8 (624 aa).

N-acetylmethionine is present on Met1. The span at 1–25 (MTQAEKGEAENGKEKGGEKEKEQRG) shows a compositional bias: basic and acidic residues. Residues 1–29 (MTQAEKGEAENGKEKGGEKEKEQRGVKRP) form a disordered region. 2 residues coordinate ATP: Ser55 and Thr56. Ser132 bears the Phosphoserine mark. An ATP-binding site is contributed by 283-286 (DVGD). Position 412 is a phosphoserine (Ser412). The interval 430–462 (SKQEQSAKATADRKSASKPIGFEGDLRGQSSDL) is disordered.

This sequence belongs to the actin family. ARP8 subfamily. Component of the chromatin remodeling INO80 complex; specifically part of a complex module associated with the DBINO domain of INO80. Exists as monomers and dimers, but the dimer is most probably the biologically relevant form required for stable interactions with histones that exploits the twofold symmetry of the nucleosome core.

It is found in the nucleus. It localises to the chromosome. Functionally, plays an important role in the functional organization of mitotic chromosomes. Exhibits low basal ATPase activity, and unable to polymerize. Its function is as follows. Proposed core component of the chromatin remodeling INO80 complex which is involved in transcriptional regulation, DNA replication and probably DNA repair. Required for the recruitment of INO80 (and probably the INO80 complex) to sites of DNA damage Strongly prefer nucleosomes and H3-H4 tetramers over H2A-H2B dimers, suggesting it may act as a nucleosome recognition module within the complex. The chain is Actin-related protein 8 (ACTR8) from Bos taurus (Bovine).